We begin with the raw amino-acid sequence, 954 residues long: MSTTSLQHFPHSYSPFSSSRSLNRMAQSQTSGLDTLAEGSQYALEQLQMSREAAGSGEATDSVGKPKDQFQVDNDNHHNNHSLSNFKNPSQRDPLVEARSTIRKNSASAPVRRRISRACDQCNQLRTKCDGQNPCAHCIEFGLTCEYARERKKRGKASKKDLAAAAAAAAAAATNSGQPNGSSGKEDAALVGGHTSPDRRPTINGRYDPAFEVPRNLNGSAQHSEASGMVGMQNSQHLPPHSQSSMGGGLEGLPLNGYNGLNDSGRPSMPVPELQSLHMLHNSHTNPRSPSSILTHHRYNGGYNDSAYSLMNPQEPNSTSISHFRLGSSTENPPNSFLGLSPPAQSPGWLPLPSPSPANFPSFSMASFSTTLRYPVLHPVLPHIASIIPQSLACDLLDVYFTSSSSSHLSPQSPYVVGYIFRKQSFLHPTKPRVCTPGLLASMLWVAAQTSDAPFLTSPPSARGRVCQKLLELTIGLLRPLIHGPAPGETSPNYAANMVINGVALGGFGVSMDQLGAQSSATGAVDDVATYVHLATVISASEYKAASMRWWTAAWSLARELKLGRELPPNTPHARPDAERDGDPDADLSKRHPPPLITSMGHGPGNTIINITEEEREERRRLWWLLYATDRHLALCYNRPLTLLDKECEGLLQPMNDDLWQAGDFATYRQAGPPVECTGHSMFGYFLPLMTILGEIVDLQQARNHPRFGLAFRNSAECEAQVLEIARQLDVYAQSLKEFETRYTSSLALGAAETEAAMDGSHPNHVSPSGRSSSTVESRVNESIVHTKMVVAYGTHIMHVLHILLAGKWDPINLLDDNDLWISSESFVAAMGHAVGAAEAAAEILEYDPDLSFMPFFFGIYLLQGSFLLLLTADKLQGDASPSVVRACETIVRAHEACVVTLNTEYQRTFRKVMRSALAQVRGRLPEDFGEQQQRRREVLALYRWTGDGSGLAL.

2 disordered regions span residues 1 to 39 (MSTT…LAEG) and 51 to 93 (REAA…SQRD). The segment covering 8 to 21 (HFPHSYSPFSSSRS) has biased composition (low complexity). Residues 22-33 (LNRMAQSQTSGL) show a composition bias toward polar residues. The segment covering 64-78 (GKPKDQFQVDNDNHH) has biased composition (basic and acidic residues). Residues 82–91 (SLSNFKNPSQ) are compositionally biased toward polar residues. The segment at residues 119–145 (CDQCNQLRTKCDGQNPCAHCIEFGLTC) is a DNA-binding region (zn(2)-C6 fungal-type). Disordered stretches follow at residues 173-226 (ATNS…HSEA), 312-332 (NPQE…STEN), 566-607 (ELPP…PGNT), and 758-777 (MDGS…STVE). Residues 174–183 (TNSGQPNGSS) are compositionally biased toward polar residues. Residues 574–590 (ARPDAERDGDPDADLSK) are compositionally biased toward basic and acidic residues. Positions 764–777 (NHVSPSGRSSSTVE) are enriched in polar residues.

This sequence belongs to the xlnR/xlr1 family.

Its subcellular location is the nucleus. Functionally, transcriptional activator of the xylanolytic system. Involved in the regulation of extracellular cellulolytic and xylanolytic genes and in the regulation of the intracellular activities of D-xylose catabolic genes in the pentose catabolic pathway (PCP) in response to the presence of D-xylose. The chain is Xylanolytic transcriptional activator xlnR (xlnR) from Aspergillus fumigatus (strain CBS 144.89 / FGSC A1163 / CEA10) (Neosartorya fumigata).